The chain runs to 148 residues: Ribose-5-P isomerase B (148 aa).

8-9 contributes to the D-ribulose 5-phosphate binding site; it reads DE. Cysteine 65 acts as the Proton acceptor in catalysis. Residues 66 to 70, asparagine 99, arginine 132, and lysine 136 contribute to the D-ribulose 5-phosphate site; that span reads GTGIG.

Belongs to the LacAB/RpiB family.

It carries out the reaction aldehydo-D-ribose 5-phosphate = D-ribulose 5-phosphate. It participates in carbohydrate degradation; pentose phosphate pathway; D-ribose 5-phosphate from D-ribulose 5-phosphate (non-oxidative stage): step 1/1. Its function is as follows. Catalyzes the interconversion of ribulose-5-P and ribose-5-P. The sequence is that of Ribose-5-P isomerase B from Listeria innocua serovar 6a (strain ATCC BAA-680 / CLIP 11262).